The chain runs to 186 residues: Ribosome-recycling factor (186 aa).

It belongs to the RRF family.

It is found in the cytoplasm. In terms of biological role, responsible for the release of ribosomes from messenger RNA at the termination of protein biosynthesis. May increase the efficiency of translation by recycling ribosomes from one round of translation to another. This is Ribosome-recycling factor from Rickettsia typhi (strain ATCC VR-144 / Wilmington).